A 726-amino-acid chain; its full sequence is Catalase-peroxidase (726 aa).

The tryptophyl-tyrosyl-methioninium (Trp-Tyr) (with M-240) cross-link spans 91–214; it reads WHAAGTYRIG…LAAVQMGLIY (124 aa). The Proton acceptor role is filled by H92. A cross-link (tryptophyl-tyrosyl-methioninium (Tyr-Met) (with W-91)) is located at residues 214-240; that stretch reads YVNPEGPNGNPDPVAAAIDIRETFRRM. Residue H255 coordinates heme b. The disordered stretch occupies residues 335–362; that stretch reads AHQWKPKGNAGAGTVPDPADPSKRRSPS.

This sequence belongs to the peroxidase family. Peroxidase/catalase subfamily. As to quaternary structure, homodimer or homotetramer. It depends on heme b as a cofactor. Post-translationally, formation of the three residue Trp-Tyr-Met cross-link is important for the catalase, but not the peroxidase activity of the enzyme.

The catalysed reaction is H2O2 + AH2 = A + 2 H2O. It carries out the reaction 2 H2O2 = O2 + 2 H2O. Bifunctional enzyme with both catalase and broad-spectrum peroxidase activity. In Cupriavidus metallidurans (strain ATCC 43123 / DSM 2839 / NBRC 102507 / CH34) (Ralstonia metallidurans), this protein is Catalase-peroxidase.